The following is a 418-amino-acid chain: Ankyrin repeat domain-containing protein 61 (418 aa).

ANK repeat units follow at residues 27–57 (ALHSRLYEAIIKEDCDTIRTLLRNHPVNQPL), 74–103 (QPIFPIHLAAEYRKPQSLLCLLQHGADPEV), 131–160 (TRIQKILTDIQNNAVLCLRILCDHGAQVNA), 166–195 (NKHSPLHLAITYGTYPVLSFLAQNGAQVNA), 199–228 (SSMTPLHMAADILNKNMIETLIACGANVNC), 233–272 (TGNTALKLAVCTASSKAGRLLAAGVGCIRLLLNHGAQVNA), 276–305 (EGQTALHEACFGGREVIINLLLEFEANVNI), and 309–342 (NGESPIYMYLQRSSNIRDVTLLARLLYRTYPLRL).

In Rattus norvegicus (Rat), this protein is Ankyrin repeat domain-containing protein 61 (Ankrd61).